A 555-amino-acid polypeptide reads, in one-letter code: Carboxysome assembly protein CcmM (555 aa).

Residues 1-209 (MAVRSTAAPP…CIAPLRNDQV (209 aa)) form a has carbonic anhydrase (CA) activity region. Glu-56 serves as the catalytic Proton donor/acceptor. Zn(2+) contacts are provided by His-75, His-102, and His-107. A disulfide bridge connects residues Cys-194 and Cys-200. The rbcS-like repeat 1, SSUL1 stretch occupies residues 223–315 (SSEVASNSLG…RVLETIIQRP (93 aa)). Disordered regions lie at residues 323-351 (TSFK…SNGA) and 441-464 (NGQV…SGTA). Low complexity-rich tracts occupy residues 330-351 (SNTN…SNGA) and 445-464 (APSS…SGTA). Residues 347-440 (YSNGATSGKV…RVLESIIQRP (94 aa)) form a rbcS-like repeat 2, SSUL2 region. A rbcS-like repeat 3, SSUL3 region spans residues 460–555 (SSGTATATAT…RVLETIIQRP (96 aa)).

This sequence belongs to the gamma-class carbonic anhydrase family. Probable homotrimer; zinc is bound between adjacent monomers. Full length protein (M58) interacts with CcmN. The C-terminal RbcS-like domains (SSUL) bind to holo-RuBisCO, as does the M35 short form. It depends on Zn(2+) as a cofactor. The first amino acid of the short form (equivalent to Val-226) is not seen in Edman degradation, while Ser-230 may be post-translationally modified. Migrates in gels as 2 about equal forms of about 60 and 35 kDa (called M58 and M35). They are probably the result of alternative translation initiation.

It localises to the carboxysome. The protein resides in the cytoplasm. The catalysed reaction is hydrogencarbonate + H(+) = CO2 + H2O. With respect to regulation, carbonic anhydrase (CA) activity is probably under redox control to remain inactive in the cytoplasm. Carbonic anhydrase (CA) activity of full-length protein and N-terminal fragment is inhibited by ethoxyzolamide. N-terminal fragment CA activity is activated under oxidizing conditions and inhibited under reducing conditions. In terms of biological role, functions as a scaffold protein for the assembly of beta-carboxysomes, initiates carboxysome assembly by coalescing RuBisCO (ribulose bisphosphate carboxylase, rbcL-rbcS). Produced as a full-length (M58) and a short form (M35), possibly by alternative translation initiation; probably both forms are required for correct carboxysome assembly and growth. In this strain both forms are equally abundant. Functionally, a moderately active carbonic anhydrase that catalyzes the reversible hydration of carbon dioxide. Essential to photosynthetic carbon dioxide fixation, supplies CO(2) to ribulose bisphosphate carboxylase (RuBisCO) in the carboxysome. Also hydrolyzes COS. Beta-carboxysome assembly initiates when soluble RuBisCO is condensed into a liquid matrix in a pre-carboxysome by the RbcS-like domains of probably both forms of CcmM. CcmN interacts with the N-terminus of full length CcmM, and then recruits the shell proteins (CcmK) via CcmN's encapsulation peptide. Shell formation requires both CcmK proteins and CcmO. CcmL caps the otherwise elongated carboxysome. Once fully encapsulated carboxysomes are formed, they migrate within the cell probably via interactions with the cytoskeleton. The chain is Carboxysome assembly protein CcmM from Nostoc sp. (strain PCC 7120 / SAG 25.82 / UTEX 2576).